The sequence spans 361 residues: Protein Csal_2339 (361 aa).

Serine 91 (proton acceptor) is an active-site residue. Residues 92 to 93 (GS) and 259 to 260 (GT) contribute to the substrate site.

Belongs to the proline racemase family.

It catalyses the reaction trans-4-hydroxy-L-proline = cis-4-hydroxy-D-proline. Its function is as follows. In vitro, catalyzes the epimerization of trans-4-hydroxy-L-proline (t4LHyp) to cis-4-hydroxy-D-proline (c4DHyp), albeit with very low efficiency. The physiological substrate may be different. Displays neither proline racemase activity nor t3LHyp dehydratase activity. This is Protein Csal_2339 from Chromohalobacter salexigens (strain ATCC BAA-138 / DSM 3043 / CIP 106854 / NCIMB 13768 / 1H11).